A 225-amino-acid chain; its full sequence is Ribosomal RNA small subunit methyltransferase G (225 aa).

S-adenosyl-L-methionine is bound by residues glycine 84, phenylalanine 89, 107–109, 135–136, and arginine 154; these read DST and AE.

It belongs to the methyltransferase superfamily. RNA methyltransferase RsmG family.

It localises to the cytoplasm. Functionally, specifically methylates the N7 position of a guanine in 16S rRNA. In Microcystis aeruginosa (strain NIES-843 / IAM M-2473), this protein is Ribosomal RNA small subunit methyltransferase G.